A 199-amino-acid polypeptide reads, in one-letter code: Pyridoxal 5'-phosphate synthase subunit PdxT (199 aa).

49–51 (GES) contacts L-glutamine. The Nucleophile role is filled by Cys-81. L-glutamine-binding positions include Arg-110 and 139-140 (IR). Active-site charge relay system residues include His-175 and Glu-177.

It belongs to the glutaminase PdxT/SNO family. As to quaternary structure, in the presence of PdxS, forms a dodecamer of heterodimers. Only shows activity in the heterodimer.

It catalyses the reaction aldehydo-D-ribose 5-phosphate + D-glyceraldehyde 3-phosphate + L-glutamine = pyridoxal 5'-phosphate + L-glutamate + phosphate + 3 H2O + H(+). It carries out the reaction L-glutamine + H2O = L-glutamate + NH4(+). It participates in cofactor biosynthesis; pyridoxal 5'-phosphate biosynthesis. Its function is as follows. Catalyzes the hydrolysis of glutamine to glutamate and ammonia as part of the biosynthesis of pyridoxal 5'-phosphate. The resulting ammonia molecule is channeled to the active site of PdxS. This is Pyridoxal 5'-phosphate synthase subunit PdxT from Frankia alni (strain DSM 45986 / CECT 9034 / ACN14a).